Consider the following 311-residue polypeptide: tRNA(Ile)-lysidine synthase (311 aa).

32-37 (SGGPDS) contributes to the ATP binding site.

It belongs to the tRNA(Ile)-lysidine synthase family.

Its subcellular location is the cytoplasm. The catalysed reaction is cytidine(34) in tRNA(Ile2) + L-lysine + ATP = lysidine(34) in tRNA(Ile2) + AMP + diphosphate + H(+). Ligates lysine onto the cytidine present at position 34 of the AUA codon-specific tRNA(Ile) that contains the anticodon CAU, in an ATP-dependent manner. Cytidine is converted to lysidine, thus changing the amino acid specificity of the tRNA from methionine to isoleucine. The chain is tRNA(Ile)-lysidine synthase from Cutibacterium acnes (strain DSM 16379 / KPA171202) (Propionibacterium acnes).